The chain runs to 80 residues: CLAVATA3/ESR (CLE)-related protein 40 (80 aa).

A signal peptide spans 1-25 (MAAMKYKGSVFIILVILLLSSSLLA). Residues 45–80 (MKKEKKIDGGTANEVEERQVPTGSDPLHHKHIPFTP) form a disordered region. The residue at position 65 (P65) is a Hydroxyproline.

The protein belongs to the CLV3/ESR signal peptide family. As to expression, mostly expressed at low levels in stems and apex, and, to a lower extent, in roots, seedlings, leaves, flowers, siliques and pollen.

Its subcellular location is the secreted. It localises to the extracellular space. Its function is as follows. Extracellular signal peptide secreted by differentiated root cells that regulates root cell fate. Acts with ACR4 as a ligand-receptor pair in a signal transduction pathway, coordinating movement of the root tip and organization of cell divisions in the root meristem. Promotes cell differentiation in the distal root meristem in a dose-dependent manner, especially the transition from columella stem cells (CSC) daughters into columella cells (CCs). Induces ACR4 expression in root quiescent center (QC). Involved in WUX5 QC-specific expression pattern regulation. Regulates the transition of protophloem cells from proliferation to differentiation, thus impinging on postembryonic growth capacity of the root meristem; this signaling pathway requires CRN and CLV2. The polypeptide is CLAVATA3/ESR (CLE)-related protein 40 (Arabidopsis thaliana (Mouse-ear cress)).